Consider the following 136-residue polypeptide: MLTAAQRLRRSTDFAAAVRGGRRVGRGVVVVHLTLPGTLPDVSSSKPARDTGAEQTSAPARAGFVVSKAVGNAVVRNAVRRRLRHLVRERLPGLPAGSTLVVRALPTAAHRSYQRLGVDLDAAIAAARAPRGRRSR.

Residues 39 to 59 are disordered; it reads LPDVSSSKPARDTGAEQTSAP.

The protein belongs to the RnpA family. Consists of a catalytic RNA component (M1 or rnpB) and a protein subunit.

It catalyses the reaction Endonucleolytic cleavage of RNA, removing 5'-extranucleotides from tRNA precursor.. Functionally, RNaseP catalyzes the removal of the 5'-leader sequence from pre-tRNA to produce the mature 5'-terminus. It can also cleave other RNA substrates such as 4.5S RNA. The protein component plays an auxiliary but essential role in vivo by binding to the 5'-leader sequence and broadening the substrate specificity of the ribozyme. In Salinispora tropica (strain ATCC BAA-916 / DSM 44818 / JCM 13857 / NBRC 105044 / CNB-440), this protein is Ribonuclease P protein component.